Consider the following 662-residue polypeptide: UvrABC system protein B (662 aa).

Positions 31–188 (DNIEGGEKAQ…NDLVDIQFER (158 aa)) constitute a Helicase ATP-binding domain. Residue 44–51 (GATGTGKT) coordinates ATP. The short motif at 97–120 (YYDYYQPEAYVPSSDTYIEKDSSV) is the Beta-hairpin element. Residues 435–601 (QIDDLLGEIN…TIKKEIRDLI (167 aa)) enclose the Helicase C-terminal domain. The 36-residue stretch at 626–661 (KELVKKLEKQMQEAVEVLDFELAAQIRDMMLEVKAL) folds into the UVR domain.

The protein belongs to the UvrB family. In terms of assembly, forms a heterotetramer with UvrA during the search for lesions. Interacts with UvrC in an incision complex.

It is found in the cytoplasm. The UvrABC repair system catalyzes the recognition and processing of DNA lesions. A damage recognition complex composed of 2 UvrA and 2 UvrB subunits scans DNA for abnormalities. Upon binding of the UvrA(2)B(2) complex to a putative damaged site, the DNA wraps around one UvrB monomer. DNA wrap is dependent on ATP binding by UvrB and probably causes local melting of the DNA helix, facilitating insertion of UvrB beta-hairpin between the DNA strands. Then UvrB probes one DNA strand for the presence of a lesion. If a lesion is found the UvrA subunits dissociate and the UvrB-DNA preincision complex is formed. This complex is subsequently bound by UvrC and the second UvrB is released. If no lesion is found, the DNA wraps around the other UvrB subunit that will check the other stand for damage. This is UvrABC system protein B from Streptococcus pneumoniae (strain ATCC 700669 / Spain 23F-1).